The primary structure comprises 215 residues: ATP phosphoribosyltransferase (215 aa).

Belongs to the ATP phosphoribosyltransferase family. Short subfamily. In terms of assembly, heteromultimer composed of HisG and HisZ subunits.

It localises to the cytoplasm. It carries out the reaction 1-(5-phospho-beta-D-ribosyl)-ATP + diphosphate = 5-phospho-alpha-D-ribose 1-diphosphate + ATP. Its pathway is amino-acid biosynthesis; L-histidine biosynthesis; L-histidine from 5-phospho-alpha-D-ribose 1-diphosphate: step 1/9. Functionally, catalyzes the condensation of ATP and 5-phosphoribose 1-diphosphate to form N'-(5'-phosphoribosyl)-ATP (PR-ATP). Has a crucial role in the pathway because the rate of histidine biosynthesis seems to be controlled primarily by regulation of HisG enzymatic activity. The polypeptide is ATP phosphoribosyltransferase (Lachnoclostridium phytofermentans (strain ATCC 700394 / DSM 18823 / ISDg) (Clostridium phytofermentans)).